Reading from the N-terminus, the 188-residue chain is Photosystem I assembly protein Ycf4 (188 aa).

A run of 2 helical transmembrane segments spans residues 26-46 and 70-90; these read IWWGTVAAIGGIGFLLAGLSS and LLFYGIAGSALSLYLWFTIIL.

This sequence belongs to the Ycf4 family.

It localises to the cellular thylakoid membrane. In terms of biological role, seems to be required for the assembly of the photosystem I complex. The polypeptide is Photosystem I assembly protein Ycf4 (Rippkaea orientalis (strain PCC 8801 / RF-1) (Cyanothece sp. (strain PCC 8801))).